The following is a 674-amino-acid chain: Pentatricopeptide repeat-containing protein At4g17616 (674 aa).

PPR repeat units follow at residues 409–443 (GSRL…GYPM), 444–478 (ELAT…GLIT), 519–553 (MLYE…KIPP), 554–584 (TVQS…IKRN), and 593–627 (TQDL…DMYN).

This sequence belongs to the PPR family. P subfamily.

The protein is Pentatricopeptide repeat-containing protein At4g17616 of Arabidopsis thaliana (Mouse-ear cress).